A 367-amino-acid chain; its full sequence is Serine/threonine-protein kinase Sgk2 (367 aa).

The segment at 1-26 (MNSSPAGTPSPQPSRANGNINLGPSA) is disordered. Position 10 is a phosphoserine (serine 10). The Protein kinase domain maps to 35–292 (FDFLKVIGKG…FLEIKNHVFF (258 aa)). ATP is bound by residues 41 to 49 (IGKGNYGKV) and lysine 64. The short motif at 68–78 (KKSILKKKEQS) is the Nuclear localization signal element. Aspartate 159 functions as the Proton acceptor in the catalytic mechanism. At threonine 193 the chain carries Phosphothreonine; by PDPK1. An AGC-kinase C-terminal domain is found at 293-367 (SPINWDDLYH…APEDDDILDC (75 aa)). 2 positions are modified to phosphoserine: serine 334 and serine 356. Phosphotyrosine is present on tyrosine 357.

It belongs to the protein kinase superfamily. AGC Ser/Thr protein kinase family. Activated by phosphorylation on Ser-356 by an unknown kinase (may be mTORC2 but not confirmed), transforming it into a substrate for PDPK1 which then phosphorylates it on Thr-193. Highly expressed in liver, kidney and pancreas, and at lower levels in brain.

It localises to the cytoplasm. The protein localises to the nucleus. It carries out the reaction L-seryl-[protein] + ATP = O-phospho-L-seryl-[protein] + ADP + H(+). The enzyme catalyses L-threonyl-[protein] + ATP = O-phospho-L-threonyl-[protein] + ADP + H(+). With respect to regulation, two specific sites, one in the kinase domain (Thr-193) and the other in the C-terminal regulatory region (Ser-356), need to be phosphorylated for its full activation. Its function is as follows. Serine/threonine-protein kinase which is involved in the regulation of a wide variety of ion channels, membrane transporters, cell growth, survival and proliferation. Up-regulates Na(+) channels: SCNN1A/ENAC, K(+) channels: KCNA3/Kv1.3, KCNE1 and KCNQ1, amino acid transporter: SLC6A19, glutamate transporter: SLC1A6/EAAT4, glutamate receptors: GRIA1/GLUR1 and GRIK2/GLUR6, Na(+)/H(+) exchanger: SLC9A3/NHE3, and the Na(+)/K(+) ATPase. This Homo sapiens (Human) protein is Serine/threonine-protein kinase Sgk2 (SGK2).